The primary structure comprises 48 residues: Delta-actitoxin-Bgr2b (48 aa).

Disulfide bonds link Cys4–Cys45, Cys6–Cys35, and Cys28–Cys46.

This sequence belongs to the sea anemone sodium channel inhibitory toxin family. Type I subfamily.

The protein localises to the secreted. The protein resides in the nematocyst. Its function is as follows. Binds voltage-dependently at site 3 of sodium channels (Nav) and inhibits the inactivation of the activated channels, thereby blocking neuronal transmission. Has effect on SCN4A/SCN1B, and SCN5A/SCN1B, has no effect on SCN2A/SCN1B, and SCN10A/SCN1B. Possesses the highest efficacy for the insect sodium channel para/tipE. Also interacts with sodium channels in cardiac cells. Shows lethality to crabs. This is Delta-actitoxin-Bgr2b from Bunodosoma granuliferum (Red warty sea anemone).